Consider the following 418-residue polypeptide: Putative ion-transport protein YfeO (418 aa).

Transmembrane regions (helical) follow at residues Met9–Met31, Ser55–Ser77, Leu90–Ala112, Pro122–Pro140, Trp147–Ile169, Pro189–Pro211, Ile223–Leu244, Leu259–Phe281, Tyr301–Gly323, Val343–Val363, and Val376–Leu398.

This sequence belongs to the chloride channel (TC 2.A.49) family.

It localises to the cell membrane. In Escherichia coli O157:H7, this protein is Putative ion-transport protein YfeO (yfeO).